Consider the following 101-residue polypeptide: MKTKLKVGDNVKILCGKDRGKTGEVVSIDRKNLKVIVKSCNMVKKVVKARTPQEKSKIIDKEAPIDISNVMLFSSGIASRIGFKFENNEKKRYLKKNGENV.

This sequence belongs to the universal ribosomal protein uL24 family. In terms of assembly, part of the 50S ribosomal subunit.

One of two assembly initiator proteins, it binds directly to the 5'-end of the 23S rRNA, where it nucleates assembly of the 50S subunit. Its function is as follows. One of the proteins that surrounds the polypeptide exit tunnel on the outside of the subunit. This Borrelia turicatae (strain 91E135) protein is Large ribosomal subunit protein uL24.